The chain runs to 199 residues: uncharacterized protein (199 aa).

This is an uncharacterized protein from Connochaetes taurinus (Blue wildebeest).